We begin with the raw amino-acid sequence, 457 residues long: Siroheme synthase (457 aa).

The segment at 1-204 (MDHLPIFCQL…ADAKAVSEIT (204 aa)) is precorrin-2 dehydrogenase /sirohydrochlorin ferrochelatase. Residues 22–23 (DV) and 43–44 (LA) each bind NAD(+). Residue Ser128 is modified to Phosphoserine. Residues 216 to 457 (GEVVLVGAGP…RDKLNWFSNH (242 aa)) are uroporphyrinogen-III C-methyltransferase. Pro225 serves as a coordination point for S-adenosyl-L-methionine. The active-site Proton acceptor is the Asp248. Lys270 acts as the Proton donor in catalysis. S-adenosyl-L-methionine is bound by residues 301 to 303 (GGD), Ile306, 331 to 332 (TA), Met382, and Gly411.

The protein in the N-terminal section; belongs to the precorrin-2 dehydrogenase / sirohydrochlorin ferrochelatase family. In the C-terminal section; belongs to the precorrin methyltransferase family.

It catalyses the reaction uroporphyrinogen III + 2 S-adenosyl-L-methionine = precorrin-2 + 2 S-adenosyl-L-homocysteine + H(+). The enzyme catalyses precorrin-2 + NAD(+) = sirohydrochlorin + NADH + 2 H(+). The catalysed reaction is siroheme + 2 H(+) = sirohydrochlorin + Fe(2+). Its pathway is cofactor biosynthesis; adenosylcobalamin biosynthesis; precorrin-2 from uroporphyrinogen III: step 1/1. The protein operates within cofactor biosynthesis; adenosylcobalamin biosynthesis; sirohydrochlorin from precorrin-2: step 1/1. It participates in porphyrin-containing compound metabolism; siroheme biosynthesis; precorrin-2 from uroporphyrinogen III: step 1/1. It functions in the pathway porphyrin-containing compound metabolism; siroheme biosynthesis; siroheme from sirohydrochlorin: step 1/1. Its pathway is porphyrin-containing compound metabolism; siroheme biosynthesis; sirohydrochlorin from precorrin-2: step 1/1. Functionally, multifunctional enzyme that catalyzes the SAM-dependent methylations of uroporphyrinogen III at position C-2 and C-7 to form precorrin-2 via precorrin-1. Then it catalyzes the NAD-dependent ring dehydrogenation of precorrin-2 to yield sirohydrochlorin. Finally, it catalyzes the ferrochelation of sirohydrochlorin to yield siroheme. The chain is Siroheme synthase from Citrobacter koseri (strain ATCC BAA-895 / CDC 4225-83 / SGSC4696).